Here is a 95-residue protein sequence, read N- to C-terminus: Small ribosomal subunit protein bS16 (95 aa).

It belongs to the bacterial ribosomal protein bS16 family.

In Streptococcus pneumoniae (strain CGSP14), this protein is Small ribosomal subunit protein bS16.